The chain runs to 401 residues: Dihydrolipoyllysine-residue succinyltransferase component of 2-oxoglutarate dehydrogenase complex (401 aa).

Residues 2-77 (SVKIIVPSLG…AVGEEIGEIN (76 aa)) form the Lipoyl-binding domain. Lys43 is modified (N6-lipoyllysine). The Peripheral subunit-binding (PSBD) domain maps to 115-152 (ILAPSVQKLVTENKLDPNNIKGTGRDGRITKGDVLETI). Residues His372 and Asp376 contribute to the active site.

It belongs to the 2-oxoacid dehydrogenase family. Forms a 24-polypeptide structural core with octahedral symmetry. Part of the 2-oxoglutarate dehydrogenase (OGDH) complex composed of E1 (2-oxoglutarate dehydrogenase), E2 (dihydrolipoamide succinyltransferase) and E3 (dihydrolipoamide dehydrogenase); the complex contains multiple copies of the three enzymatic components (E1, E2 and E3). (R)-lipoate serves as cofactor.

The enzyme catalyses N(6)-[(R)-dihydrolipoyl]-L-lysyl-[protein] + succinyl-CoA = N(6)-[(R)-S(8)-succinyldihydrolipoyl]-L-lysyl-[protein] + CoA. The protein operates within amino-acid degradation; L-lysine degradation via saccharopine pathway; glutaryl-CoA from L-lysine: step 6/6. Functionally, E2 component of the 2-oxoglutarate dehydrogenase (OGDH) complex which catalyzes the second step in the conversion of 2-oxoglutarate to succinyl-CoA and CO(2). The chain is Dihydrolipoyllysine-residue succinyltransferase component of 2-oxoglutarate dehydrogenase complex (sucB) from Rickettsia felis (strain ATCC VR-1525 / URRWXCal2) (Rickettsia azadi).